A 580-amino-acid polypeptide reads, in one-letter code: NADH-quinone oxidoreductase subunit C/D (580 aa).

Residues 1–171 (MSLDQAIPEA…PPFVLTDRLF (171 aa)) are NADH dehydrogenase I subunit C. The interval 195-580 (ELMVLNFGPH…IDFVMSDVDR (386 aa)) is NADH dehydrogenase I subunit D.

The protein in the N-terminal section; belongs to the complex I 30 kDa subunit family. This sequence in the C-terminal section; belongs to the complex I 49 kDa subunit family. In terms of assembly, NDH-1 is composed of 13 different subunits. Subunits NuoB, CD, E, F, and G constitute the peripheral sector of the complex.

The protein localises to the cell inner membrane. It catalyses the reaction a quinone + NADH + 5 H(+)(in) = a quinol + NAD(+) + 4 H(+)(out). Functionally, NDH-1 shuttles electrons from NADH, via FMN and iron-sulfur (Fe-S) centers, to quinones in the respiratory chain. The immediate electron acceptor for the enzyme in this species is believed to be ubiquinone. Couples the redox reaction to proton translocation (for every two electrons transferred, four hydrogen ions are translocated across the cytoplasmic membrane), and thus conserves the redox energy in a proton gradient. The polypeptide is NADH-quinone oxidoreductase subunit C/D (Cereibacter sphaeroides (strain KD131 / KCTC 12085) (Rhodobacter sphaeroides)).